Here is a 392-residue protein sequence, read N- to C-terminus: D-amino-acid oxidase 2 (392 aa).

FAD is bound by residues Ser10, Ile13, Arg33, Asp34, Ala45, Ser46, Gly50, and Asn52. Phe56, Tyr245, Tyr262, and Arg311 together coordinate anthranilate. Residues Tyr245, Tyr262, and Arg311 each contribute to the (R)-lactate site. FAD contacts are provided by Arg311, Gly361, Ser362, Gly364, and Gln366. Ser362 contributes to the anthranilate binding site. Ser362 contributes to the (R)-lactate binding site. The Microbody targeting signal signature appears at 390–392; the sequence is AKL.

The protein belongs to the DAMOX/DASOX family. Requires FAD as cofactor.

It is found in the peroxisome matrix. It carries out the reaction a D-alpha-amino acid + O2 + H2O = a 2-oxocarboxylate + H2O2 + NH4(+). The enzyme catalyses D-methionine + O2 + H2O = 4-methylsulfanyl-2-oxobutanoate + H2O2 + NH4(+). It catalyses the reaction D-serine + O2 + H2O = 3-hydroxypyruvate + H2O2 + NH4(+). The catalysed reaction is D-histidine + O2 + H2O = 3-(imidazol-5-yl)pyruvate + H2O2 + NH4(+). It carries out the reaction D-proline + O2 = 1-pyrroline-2-carboxylate + H2O2. The enzyme catalyses D-alanine + O2 + H2O = pyruvate + H2O2 + NH4(+). It catalyses the reaction D-leucine + O2 + H2O = 4-methyl-2-oxopentanoate + H2O2 + NH4(+). The catalysed reaction is D-valine + O2 + H2O = 3-methyl-2-oxobutanoate + H2O2 + NH4(+). Functionally, catalyzes the oxidative deamination of D-amino acids with broad substrate specificity. Enables the organism to utilize D-amino acids as a source of nutrients. Enables the organism to utilize D-alanine, D-cysteine, D-histidine, D-leucine, D-methionine, D-phenylalanine, D-proline, D-serine, D-threonine, D-aspartate and D-valine as a nitrogen source and may also contribute to utlization of D-tryptophan, D-tyrosine and D-asparagine as a nitrogen source. Protects the organism from the toxicity of D-amino acids, including from D-alanine. May play a role in its interaction with the host. The sequence is that of D-amino-acid oxidase 2 from Cryptococcus deuterogattii (strain R265) (Cryptococcus gattii VGII (strain R265)).